The following is a 205-amino-acid chain: Small ribosomal subunit protein uS4 (205 aa).

Over residues 1–16 (MSKRESSKYKIDRRMG) the composition is skewed to basic and acidic residues. Residues 1–46 (MSKRESSKYKIDRRMGENIWGRPKSPVNRREYGPGQHGQRRKGKLS) are disordered. The S4 RNA-binding domain maps to 94–157 (SRLDAIVYRA…KQLVIVLESV (64 aa)).

It belongs to the universal ribosomal protein uS4 family. Part of the 30S ribosomal subunit. Contacts protein S5. The interaction surface between S4 and S5 is involved in control of translational fidelity.

Functionally, one of the primary rRNA binding proteins, it binds directly to 16S rRNA where it nucleates assembly of the body of the 30S subunit. Its function is as follows. With S5 and S12 plays an important role in translational accuracy. In Rhizobium rhizogenes (strain K84 / ATCC BAA-868) (Agrobacterium radiobacter), this protein is Small ribosomal subunit protein uS4.